The sequence spans 215 residues: GTP-binding nuclear protein Ran (215 aa).

One can recognise a Small GTPase Ran-type domain in the interval 6–170; sequence DIPTFKLVLV…LWLARKLLGD (165 aa). GTP-binding positions include 17–24, 35–41, G67, 121–124, and 149–151; these read DGGTGKTT, EKKYVAT, NKVD, and SAK. The tract at residues 36–44 is switch-I; the sequence is KKYVATLGV. Residues 67 to 83 are switch-II; the sequence is GQEKFGGLRDGYYIQGQ.

It belongs to the small GTPase superfamily. Ran family. In terms of assembly, found in a nuclear export complex with RanGTP, exportin and pre-miRNA.

It localises to the nucleus. In terms of biological role, GTP-binding protein involved in nucleocytoplasmic transport. Required for the import of protein into the nucleus and also for RNA export. Involved in chromatin condensation and control of cell cycle. The sequence is that of GTP-binding nuclear protein Ran from Brugia malayi (Filarial nematode worm).